Consider the following 146-residue polypeptide: Lysozyme C-2 (146 aa).

The first 18 residues, M1–A18, serve as a signal peptide directing secretion. The 128-residue stretch at K19–L146 folds into the C-type lysozyme domain. Disulfide bonds link C24-C144, C48-C132, C81-C97, and C93-C111. Active-site residues include E53 and D69.

The protein belongs to the glycosyl hydrolase 22 family. As to quaternary structure, monomer.

Its subcellular location is the secreted. The enzyme catalyses Hydrolysis of (1-&gt;4)-beta-linkages between N-acetylmuramic acid and N-acetyl-D-glucosamine residues in a peptidoglycan and between N-acetyl-D-glucosamine residues in chitodextrins.. In terms of biological role, lysozymes have primarily a bacteriolytic function; those in tissues and body fluids are associated with the monocyte-macrophage system and enhance the activity of immunoagents. This is Lysozyme C-2 from Sus scrofa (Pig).